The sequence spans 123 residues: Large ribosomal subunit protein bL12 (123 aa).

Belongs to the bacterial ribosomal protein bL12 family. As to quaternary structure, homodimer. Part of the ribosomal stalk of the 50S ribosomal subunit. Forms a multimeric L10(L12)X complex, where L10 forms an elongated spine to which 2 to 4 L12 dimers bind in a sequential fashion. Binds GTP-bound translation factors.

In terms of biological role, forms part of the ribosomal stalk which helps the ribosome interact with GTP-bound translation factors. Is thus essential for accurate translation. The chain is Large ribosomal subunit protein bL12 from Marinomonas sp. (strain MWYL1).